The following is a 326-amino-acid chain: tRNA-modifying protein YgfZ (326 aa).

2 residues coordinate folate: W27 and W189.

Belongs to the tRNA-modifying YgfZ family.

It is found in the cytoplasm. In terms of biological role, folate-binding protein involved in regulating the level of ATP-DnaA and in the modification of some tRNAs. It is probably a key factor in regulatory networks that act via tRNA modification, such as initiation of chromosomal replication. In Escherichia fergusonii (strain ATCC 35469 / DSM 13698 / CCUG 18766 / IAM 14443 / JCM 21226 / LMG 7866 / NBRC 102419 / NCTC 12128 / CDC 0568-73), this protein is tRNA-modifying protein YgfZ.